The sequence spans 343 residues: Selenide, water dikinase (343 aa).

U16 is a catalytic residue. A non-standard amino acid (selenocysteine) is located at residue U16. ATP contacts are provided by residues K19 and 46–48; that span reads GAE. D49 lines the Mg(2+) pocket. ATP is bound by residues D66, D89, and 137–139; that span reads GHT. D89 provides a ligand contact to Mg(2+). Position 225 (D225) interacts with Mg(2+).

It belongs to the selenophosphate synthase 1 family. Class I subfamily. In terms of assembly, homodimer. It depends on Mg(2+) as a cofactor.

The catalysed reaction is hydrogenselenide + ATP + H2O = selenophosphate + AMP + phosphate + 2 H(+). Its function is as follows. Synthesizes selenophosphate from selenide and ATP. The protein is Selenide, water dikinase of Geobacter sp. (strain M21).